Reading from the N-terminus, the 133-residue chain is Holo-[acyl-carrier-protein] synthase (133 aa).

Positions 8 and 57 each coordinate Mg(2+).

This sequence belongs to the P-Pant transferase superfamily. AcpS family. Mg(2+) serves as cofactor.

The protein localises to the cytoplasm. It carries out the reaction apo-[ACP] + CoA = holo-[ACP] + adenosine 3',5'-bisphosphate + H(+). In terms of biological role, transfers the 4'-phosphopantetheine moiety from coenzyme A to a Ser of acyl-carrier-protein. The sequence is that of Holo-[acyl-carrier-protein] synthase from Parvibaculum lavamentivorans (strain DS-1 / DSM 13023 / NCIMB 13966).